Reading from the N-terminus, the 171-residue chain is NADH-quinone oxidoreductase subunit B 2 (171 aa).

[4Fe-4S] cluster is bound by residues Cys-37, Cys-38, Cys-102, and Cys-132.

The protein belongs to the complex I 20 kDa subunit family. NDH-1 is composed of 14 different subunits. Subunits NuoB, C, D, E, F, and G constitute the peripheral sector of the complex. [4Fe-4S] cluster serves as cofactor.

Its subcellular location is the cell inner membrane. It catalyses the reaction a quinone + NADH + 5 H(+)(in) = a quinol + NAD(+) + 4 H(+)(out). Functionally, NDH-1 shuttles electrons from NADH, via FMN and iron-sulfur (Fe-S) centers, to quinones in the respiratory chain. Couples the redox reaction to proton translocation (for every two electrons transferred, four hydrogen ions are translocated across the cytoplasmic membrane), and thus conserves the redox energy in a proton gradient. The polypeptide is NADH-quinone oxidoreductase subunit B 2 (Chromobacterium violaceum (strain ATCC 12472 / DSM 30191 / JCM 1249 / CCUG 213 / NBRC 12614 / NCIMB 9131 / NCTC 9757 / MK)).